We begin with the raw amino-acid sequence, 940 residues long: Isoleucine--tRNA ligase (940 aa).

Residues 58 to 68 (PYANGSIHIGH) carry the 'HIGH' region motif. Position 564 (E564) interacts with L-isoleucyl-5'-AMP. A 'KMSKS' region motif is present at residues 605 to 609 (KMSKS). K608 serves as a coordination point for ATP. Zn(2+) contacts are provided by C903, C906, C923, and C926.

This sequence belongs to the class-I aminoacyl-tRNA synthetase family. IleS type 1 subfamily. In terms of assembly, monomer. Zn(2+) is required as a cofactor.

It localises to the cytoplasm. It carries out the reaction tRNA(Ile) + L-isoleucine + ATP = L-isoleucyl-tRNA(Ile) + AMP + diphosphate. In terms of biological role, catalyzes the attachment of isoleucine to tRNA(Ile). As IleRS can inadvertently accommodate and process structurally similar amino acids such as valine, to avoid such errors it has two additional distinct tRNA(Ile)-dependent editing activities. One activity is designated as 'pretransfer' editing and involves the hydrolysis of activated Val-AMP. The other activity is designated 'posttransfer' editing and involves deacylation of mischarged Val-tRNA(Ile). This chain is Isoleucine--tRNA ligase, found in Shewanella sp. (strain ANA-3).